The chain runs to 405 residues: Argininosuccinate synthase (405 aa).

Residue 8 to 16 (AYSGGLDTS) participates in ATP binding. L-citrulline contacts are provided by tyrosine 86 and serine 91. Glycine 116 is an ATP binding site. Threonine 118, asparagine 122, and aspartate 123 together coordinate L-aspartate. Asparagine 122 contributes to the L-citrulline binding site. Arginine 126, serine 175, serine 184, glutamate 260, and tyrosine 272 together coordinate L-citrulline.

It belongs to the argininosuccinate synthase family. Type 1 subfamily. Homotetramer.

The protein resides in the cytoplasm. It catalyses the reaction L-citrulline + L-aspartate + ATP = 2-(N(omega)-L-arginino)succinate + AMP + diphosphate + H(+). Its pathway is amino-acid biosynthesis; L-arginine biosynthesis; L-arginine from L-ornithine and carbamoyl phosphate: step 2/3. This Koribacter versatilis (strain Ellin345) protein is Argininosuccinate synthase.